The chain runs to 61 residues: uncharacterized protein (61 aa).

This is an uncharacterized protein from Escherichia coli O6:K15:H31 (strain 536 / UPEC).